Consider the following 175-residue polypeptide: Large ribosomal subunit protein uL6 (175 aa).

Belongs to the universal ribosomal protein uL6 family. In terms of assembly, part of the 50S ribosomal subunit.

This protein binds to the 23S rRNA, and is important in its secondary structure. It is located near the subunit interface in the base of the L7/L12 stalk, and near the tRNA binding site of the peptidyltransferase center. The sequence is that of Large ribosomal subunit protein uL6 from Xanthomonas campestris pv. campestris (strain 8004).